We begin with the raw amino-acid sequence, 407 residues long: Carbamoyl phosphate synthase small chain (407 aa).

The CPSase stretch occupies residues M1 to T205. L-glutamine-binding residues include S60, G257, and G259. A Glutamine amidotransferase type-1 domain is found at H209–E397. The active-site Nucleophile is the C286. Residues L287, Q290, N328, G330, and F331 each contribute to the L-glutamine site. Residues H370 and E372 contribute to the active site.

It belongs to the CarA family. As to quaternary structure, composed of two chains; the small (or glutamine) chain promotes the hydrolysis of glutamine to ammonia, which is used by the large (or ammonia) chain to synthesize carbamoyl phosphate. Tetramer of heterodimers (alpha,beta)4.

It catalyses the reaction hydrogencarbonate + L-glutamine + 2 ATP + H2O = carbamoyl phosphate + L-glutamate + 2 ADP + phosphate + 2 H(+). The catalysed reaction is L-glutamine + H2O = L-glutamate + NH4(+). Its pathway is amino-acid biosynthesis; L-arginine biosynthesis; carbamoyl phosphate from bicarbonate: step 1/1. It participates in pyrimidine metabolism; UMP biosynthesis via de novo pathway; (S)-dihydroorotate from bicarbonate: step 1/3. In terms of biological role, small subunit of the glutamine-dependent carbamoyl phosphate synthetase (CPSase). CPSase catalyzes the formation of carbamoyl phosphate from the ammonia moiety of glutamine, carbonate, and phosphate donated by ATP, constituting the first step of 2 biosynthetic pathways, one leading to arginine and/or urea and the other to pyrimidine nucleotides. The small subunit (glutamine amidotransferase) binds and cleaves glutamine to supply the large subunit with the substrate ammonia. The sequence is that of Carbamoyl phosphate synthase small chain from Brucella anthropi (strain ATCC 49188 / DSM 6882 / CCUG 24695 / JCM 21032 / LMG 3331 / NBRC 15819 / NCTC 12168 / Alc 37) (Ochrobactrum anthropi).